A 500-amino-acid chain; its full sequence is Carnosic acid synthase (500 aa).

A helical membrane pass occupies residues 4–24 (LILLSLAFLASCVVAYSRRRP). A heme-binding site is contributed by cysteine 443.

Belongs to the cytochrome P450 family. It depends on heme as a cofactor. Mostly expressed in young leaves, particularly in glandular trichomes.

The protein resides in the membrane. The enzyme catalyses 11-hydroxyferruginol + 3 reduced [NADPH--hemoprotein reductase] + 3 O2 = carnosate + 3 oxidized [NADPH--hemoprotein reductase] + 4 H2O + 4 H(+). It catalyses the reaction miltiradiene + 2 reduced [NADPH--hemoprotein reductase] + 2 O2 = miltiradien-20-al + 2 oxidized [NADPH--hemoprotein reductase] + 3 H2O + 2 H(+). The catalysed reaction is ferruginol + 3 reduced [NADPH--hemoprotein reductase] + 3 O2 = pisiferate + 3 oxidized [NADPH--hemoprotein reductase] + 4 H2O + 4 H(+). It participates in secondary metabolite biosynthesis; terpenoid biosynthesis. In terms of biological role, monooxygenase involved in the biosynthesis of carnosate, a potent antioxidant labdane-related diterpene natural product. Catalyzes the oxidation of 11-hydroxyferruginol to produce carnosate. Mediates the conversion of miltiradien into miltiradien-20-al. Also involved in the production of pisiferic acid and derivative products from ferruginol. In Salvia fruticosa (Greek sage), this protein is Carnosic acid synthase.